A 452-amino-acid chain; its full sequence is Probable hexaprenyl pyrophosphate synthase, mitochondrial (452 aa).

Lys-108, Arg-111, and His-204 together coordinate isopentenyl diphosphate. The Mg(2+) site is built by Asp-211 and Asp-215. An all-trans-polyprenyl diphosphate is bound at residue Arg-220. Isopentenyl diphosphate is bound at residue Arg-221. Residues Lys-303, Thr-304, Gln-341, and Lys-358 each coordinate an all-trans-polyprenyl diphosphate.

Belongs to the FPP/GGPP synthase family. Requires Mg(2+) as cofactor.

It localises to the mitochondrion. The protein operates within cofactor biosynthesis; ubiquinone biosynthesis. Its function is as follows. Assembly of polyisoprenoid side chains. The polyprenyl synthase of coenzyme Q biosynthesis catalyzes the formation from isopentenyl diphosphate of all trans-polyprenyl pyrophosphates generally ranging in length of between 6 and 10 isoprene units depending on the species. The protein is Probable hexaprenyl pyrophosphate synthase, mitochondrial (COQ1) of Yarrowia lipolytica (strain CLIB 122 / E 150) (Yeast).